Consider the following 451-residue polypeptide: CBL-interacting protein kinase 10 (451 aa).

A Protein kinase domain is found at 13–267 (YEIGKLLGQG…VSEIMEDPWF (255 aa)). ATP-binding positions include 19–27 (LGQGSFAKV) and lysine 42. Aspartate 135 functions as the Proton acceptor in the catalytic mechanism. Residues 153–182 (DFGLSALAECKRQDGLLHTTCGTPAYVAPE) are activation loop. Residues 304–336 (INEGKQEAENLTSLNAFDIISLSSGFDLSAMFE) enclose the NAF domain. The PPI stretch occupies residues 341-370 (KEESKFTSTNTATTITKKLEDVAKNLRLKF).

It belongs to the protein kinase superfamily. CAMK Ser/Thr protein kinase family. SNF1 subfamily. Mn(2+) is required as a cofactor.

It carries out the reaction L-seryl-[protein] + ATP = O-phospho-L-seryl-[protein] + ADP + H(+). The enzyme catalyses L-threonyl-[protein] + ATP = O-phospho-L-threonyl-[protein] + ADP + H(+). Functionally, CIPK serine-threonine protein kinases interact with CBL proteins. Binding of a CBL protein to the regulatory NAF domain of CIPK protein lead to the activation of the kinase in a calcium-dependent manner. The protein is CBL-interacting protein kinase 10 (CIPK10) of Oryza sativa subsp. japonica (Rice).